A 227-amino-acid polypeptide reads, in one-letter code: Uridylate kinase (227 aa).

7–11 is an ATP binding site; it reads KISGK. Gly44 lines the UMP pocket. The ATP site is built by Gly45 and Arg49. Residues Asp66 and 114–120 each bind UMP; that span reads FQPGQST. ATP-binding residues include Thr140, Asn141, Tyr146, and Asp149.

Belongs to the UMP kinase family. In terms of assembly, homohexamer.

Its subcellular location is the cytoplasm. The enzyme catalyses UMP + ATP = UDP + ADP. Its pathway is pyrimidine metabolism; CTP biosynthesis via de novo pathway; UDP from UMP (UMPK route): step 1/1. Unlike most bacteria, is not activated by GTP. UTP acts as a competitive inhibitor against both substrates. High concentration of UMP abolishes the inhibition of UTP at low ATP concentrations, indicating that UTP binds to the acceptor site (UMP site). Functionally, catalyzes the reversible phosphorylation of UMP to UDP, with ATP as the most efficient phosphate donor. Is also able to phosphorylate dUMP, although much less efficiently. In Saccharolobus solfataricus (strain ATCC 35092 / DSM 1617 / JCM 11322 / P2) (Sulfolobus solfataricus), this protein is Uridylate kinase (pyrH).